We begin with the raw amino-acid sequence, 260 residues long: Large ribosomal subunit protein uL30 (260 aa).

Met1 is modified (N-acetylmethionine). A run of 5 repeats spans residues 7–18 (KKKKVAAALGTL), 19–30 (KKKKVPAVPETL), 31–42 (KKKRRNFAELKV), 43–54 (KRLRKKFALKTL), and 55–66 (RKARRKLIYEKA). The interval 7–66 (KKKKVAAALGTLKKKKVPAVPETLKKKRRNFAELKVKRLRKKFALKTLRKARRKLIYEKA) is 5 X 12 AA tandem repeats. A Phosphothreonine modification is found at Thr29. The residue at position 136 (Lys136) is an N6-acetyllysine. Lys139 is subject to N6-succinyllysine. Phosphotyrosine is present on Tyr151.

The protein belongs to the universal ribosomal protein uL30 family. Component of the large ribosomal subunit. Homodimer. Interacts with DHX33.

It is found in the cytoplasm. Its function is as follows. Component of the large ribosomal subunit. The ribosome is a large ribonucleoprotein complex responsible for the synthesis of proteins in the cell. Binds to G-rich structures in 28S rRNA and in mRNAs. Plays a regulatory role in the translation apparatus; inhibits cell-free translation of mRNAs. The polypeptide is Large ribosomal subunit protein uL30 (Rpl7) (Rattus norvegicus (Rat)).